The sequence spans 428 residues: Nematode resistance protein-like HSPRO1 (428 aa).

As to quaternary structure, interacts with SNF4.

The protein resides in the cytoplasm. In terms of biological role, positive regulator of basal resistance. The chain is Nematode resistance protein-like HSPRO1 (HSPRO1) from Arabidopsis thaliana (Mouse-ear cress).